The primary structure comprises 281 residues: Diaminopimelate epimerase (281 aa).

Substrate contacts are provided by Asn-13 and Asn-66. The active-site Proton donor is Cys-75. Residues 76–77 (GN), Asn-164, Asn-197, and 215–216 (ER) each bind substrate. Cys-224 serves as the catalytic Proton acceptor. 225 to 226 (GT) is a binding site for substrate.

It belongs to the diaminopimelate epimerase family. As to quaternary structure, homodimer.

It localises to the cytoplasm. It catalyses the reaction (2S,6S)-2,6-diaminopimelate = meso-2,6-diaminopimelate. It participates in amino-acid biosynthesis; L-lysine biosynthesis via DAP pathway; DL-2,6-diaminopimelate from LL-2,6-diaminopimelate: step 1/1. Its function is as follows. Catalyzes the stereoinversion of LL-2,6-diaminopimelate (L,L-DAP) to meso-diaminopimelate (meso-DAP), a precursor of L-lysine and an essential component of the bacterial peptidoglycan. This is Diaminopimelate epimerase from Microcystis aeruginosa (strain NIES-843 / IAM M-2473).